The following is a 38-amino-acid chain: Large ribosomal subunit protein bL36 (38 aa).

It belongs to the bacterial ribosomal protein bL36 family.

In Chloroflexus aurantiacus (strain ATCC 29366 / DSM 635 / J-10-fl), this protein is Large ribosomal subunit protein bL36.